The chain runs to 119 residues: Ribosome-binding factor A (119 aa).

Belongs to the RbfA family. In terms of assembly, monomer. Binds 30S ribosomal subunits, but not 50S ribosomal subunits or 70S ribosomes.

The protein localises to the cytoplasm. In terms of biological role, one of several proteins that assist in the late maturation steps of the functional core of the 30S ribosomal subunit. Associates with free 30S ribosomal subunits (but not with 30S subunits that are part of 70S ribosomes or polysomes). Required for efficient processing of 16S rRNA. May interact with the 5'-terminal helix region of 16S rRNA. This chain is Ribosome-binding factor A, found in Geobacter sp. (strain M21).